Consider the following 354-residue polypeptide: Holliday junction branch migration complex subunit RuvB (354 aa).

The tract at residues 5 to 197 is large ATPase domain (RuvB-L); it reads TDDFSAADLP…FGIVARLEFY (193 aa). Residues Leu36, Arg37, Gly78, Lys81, Thr82, Thr83, 144-146, Arg187, Tyr197, and Arg234 contribute to the ATP site; that span reads EDY. Thr82 serves as a coordination point for Mg(2+). The segment at 198–268 is small ATPAse domain (RuvB-S); it reads TAEELGRIVR…IANKALAMLD (71 aa). The segment at 271-354 is head domain (RuvB-H); sequence PQGFDVMDRK…PPVSGNDMFT (84 aa). 3 residues coordinate DNA: Arg307, Arg326, and Arg331.

Belongs to the RuvB family. In terms of assembly, homohexamer. Forms an RuvA(8)-RuvB(12)-Holliday junction (HJ) complex. HJ DNA is sandwiched between 2 RuvA tetramers; dsDNA enters through RuvA and exits via RuvB. An RuvB hexamer assembles on each DNA strand where it exits the tetramer. Each RuvB hexamer is contacted by two RuvA subunits (via domain III) on 2 adjacent RuvB subunits; this complex drives branch migration. In the full resolvosome a probable DNA-RuvA(4)-RuvB(12)-RuvC(2) complex forms which resolves the HJ.

It localises to the cytoplasm. The enzyme catalyses ATP + H2O = ADP + phosphate + H(+). Its function is as follows. The RuvA-RuvB-RuvC complex processes Holliday junction (HJ) DNA during genetic recombination and DNA repair, while the RuvA-RuvB complex plays an important role in the rescue of blocked DNA replication forks via replication fork reversal (RFR). RuvA specifically binds to HJ cruciform DNA, conferring on it an open structure. The RuvB hexamer acts as an ATP-dependent pump, pulling dsDNA into and through the RuvAB complex. RuvB forms 2 homohexamers on either side of HJ DNA bound by 1 or 2 RuvA tetramers; 4 subunits per hexamer contact DNA at a time. Coordinated motions by a converter formed by DNA-disengaged RuvB subunits stimulates ATP hydrolysis and nucleotide exchange. Immobilization of the converter enables RuvB to convert the ATP-contained energy into a lever motion, pulling 2 nucleotides of DNA out of the RuvA tetramer per ATP hydrolyzed, thus driving DNA branch migration. The RuvB motors rotate together with the DNA substrate, which together with the progressing nucleotide cycle form the mechanistic basis for DNA recombination by continuous HJ branch migration. Branch migration allows RuvC to scan DNA until it finds its consensus sequence, where it cleaves and resolves cruciform DNA. This is Holliday junction branch migration complex subunit RuvB from Polaromonas sp. (strain JS666 / ATCC BAA-500).